Reading from the N-terminus, the 135-residue chain is UPF0102 protein PGN_1801 (135 aa).

It belongs to the UPF0102 family.

The sequence is that of UPF0102 protein PGN_1801 from Porphyromonas gingivalis (strain ATCC 33277 / DSM 20709 / CIP 103683 / JCM 12257 / NCTC 11834 / 2561).